A 176-amino-acid polypeptide reads, in one-letter code: Protein MAL2 (176 aa).

Residues 1–34 (MSAGGASVPPPPNPAVSFPPPRVTLPAGPDILRT) are Cytoplasmic-facing. In terms of domain architecture, MARVEL spans 31–175 (ILRTYSGAFV…SLGLALRRWR (145 aa)). The chain crosses the membrane as a helical span at residues 35-55 (YSGAFVCLEILFGGLVWILVA). Residues 56 to 66 (SSNVPLPLLQG) are Lumenal-facing. A helical membrane pass occupies residues 67–87 (WVMFVSVTAFFFSLLFLGMFL). Residues 88 to 102 (SGMVAQIDANWNFLD) lie on the Cytoplasmic side of the membrane. A helical membrane pass occupies residues 103–123 (FAYHFTVFVFYFGAFLLEAAA). At 124-149 (TSLHDLHCNTTITGQPLLSDNQYNIN) the chain is on the lumenal side. Asn132 carries an N-linked (GlcNAc...) asparagine glycan. Residues 150-170 (VAASIFAFMTTACYGCSLGLA) traverse the membrane as a helical segment. Residues 171-176 (LRRWRP) are Cytoplasmic-facing.

This sequence belongs to the MAL family. Interacts with TPD52L2. In terms of tissue distribution, predominantly expressed in kidney, lung, and liver. Also found in thyroid gland, stomach and, at lower levels in testis and small intestine.

It localises to the cell membrane. The protein resides in the apical cell membrane. It is found in the endomembrane system. Its subcellular location is the cytoplasm. The protein localises to the perinuclear region. Its function is as follows. Member of the machinery of polarized transport. Required for the indirect transcytotic route at the step of the egress of the transcytosing cargo from perinuclear endosomes in order for it to travel to the apical surface via a raft-dependent pathway. The chain is Protein MAL2 (MAL2) from Homo sapiens (Human).